Reading from the N-terminus, the 394-residue chain is Histidinol dehydrogenase (394 aa).

Residues Tyr113, Gln172, and Asn195 each coordinate NAD(+). Substrate contacts are provided by Thr218, Gln240, and His243. Positions 240 and 243 each coordinate Zn(2+). Active-site proton acceptor residues include Glu294 and His295. 4 residues coordinate substrate: His295, Asp327, Glu380, and His385. Residue Asp327 participates in Zn(2+) binding. His385 lines the Zn(2+) pocket.

This sequence belongs to the histidinol dehydrogenase family. Requires Zn(2+) as cofactor.

It catalyses the reaction L-histidinol + 2 NAD(+) + H2O = L-histidine + 2 NADH + 3 H(+). Its pathway is amino-acid biosynthesis; L-histidine biosynthesis; L-histidine from 5-phospho-alpha-D-ribose 1-diphosphate: step 9/9. Its function is as follows. Catalyzes the sequential NAD-dependent oxidations of L-histidinol to L-histidinaldehyde and then to L-histidine. This chain is Histidinol dehydrogenase, found in Sulfurisphaera tokodaii (strain DSM 16993 / JCM 10545 / NBRC 100140 / 7) (Sulfolobus tokodaii).